Reading from the N-terminus, the 570-residue chain is Sulfite reductase [NADPH] hemoprotein beta-component (570 aa).

[4Fe-4S] cluster is bound by residues C434, C440, C479, and C483. Siroheme is bound at residue C483.

It belongs to the nitrite and sulfite reductase 4Fe-4S domain family. As to quaternary structure, alpha(8)-beta(8). The alpha component is a flavoprotein, the beta component is a hemoprotein. Requires siroheme as cofactor. It depends on [4Fe-4S] cluster as a cofactor.

The enzyme catalyses hydrogen sulfide + 3 NADP(+) + 3 H2O = sulfite + 3 NADPH + 4 H(+). The protein operates within sulfur metabolism; hydrogen sulfide biosynthesis; hydrogen sulfide from sulfite (NADPH route): step 1/1. Component of the sulfite reductase complex that catalyzes the 6-electron reduction of sulfite to sulfide. This is one of several activities required for the biosynthesis of L-cysteine from sulfate. The polypeptide is Sulfite reductase [NADPH] hemoprotein beta-component (Salmonella enteritidis PT4 (strain P125109)).